Consider the following 370-residue polypeptide: Quinolinate synthase (370 aa).

His62 and Ser83 together coordinate iminosuccinate. Cys128 lines the [4Fe-4S] cluster pocket. Iminosuccinate contacts are provided by residues 154-156 (YAN) and Ser171. Residue Cys215 coordinates [4Fe-4S] cluster. Iminosuccinate-binding positions include 241 to 243 (HPE) and Thr258. [4Fe-4S] cluster is bound at residue Cys312.

This sequence belongs to the quinolinate synthase family. Type 1 subfamily. [4Fe-4S] cluster is required as a cofactor.

The protein resides in the cytoplasm. It carries out the reaction iminosuccinate + dihydroxyacetone phosphate = quinolinate + phosphate + 2 H2O + H(+). Its pathway is cofactor biosynthesis; NAD(+) biosynthesis; quinolinate from iminoaspartate: step 1/1. Functionally, catalyzes the condensation of iminoaspartate with dihydroxyacetone phosphate to form quinolinate. The protein is Quinolinate synthase of Neisseria meningitidis serogroup C (strain 053442).